Consider the following 218-residue polypeptide: Ras-related protein Rab11E (218 aa).

Position 20–27 (20–27) interacts with GTP; it reads GDSGVGKS. The short motif at 42 to 50 is the Effector region element; that stretch reads SKSTIGVEF. GTP-binding positions include 68–72 and 126–129; these read DTAGQ and NKSD. 2 S-geranylgeranyl cysteine lipidation sites follow: C215 and C216.

Belongs to the small GTPase superfamily. Rab family.

The protein resides in the cell membrane. The sequence is that of Ras-related protein Rab11E (RAB11E) from Lotus japonicus (Lotus corniculatus var. japonicus).